We begin with the raw amino-acid sequence, 71 residues long: Large ribosomal subunit protein uL29 (71 aa).

The interval 1-20 (MKARELQELRQGSSPQDLQE) is disordered.

It belongs to the universal ribosomal protein uL29 family.

In Clostridium kluyveri (strain ATCC 8527 / DSM 555 / NBRC 12016 / NCIMB 10680 / K1), this protein is Large ribosomal subunit protein uL29.